The following is a 165-amino-acid chain: Large ribosomal subunit protein eL15 (165 aa).

Residues 126 to 147 (TSAGRKSRGLGKGHKFHHTIGG) are disordered. The span at 130–143 (RKSRGLGKGHKFHH) shows a compositional bias: basic residues.

This sequence belongs to the eukaryotic ribosomal protein eL15 family. As to quaternary structure, component of the large ribosomal subunit.

The protein localises to the cytoplasm. Its function is as follows. Component of the large ribosomal subunit. The ribosome is a large ribonucleoprotein complex responsible for the synthesis of proteins in the cell. This is Large ribosomal subunit protein eL15 (RPL15) from Gallus gallus (Chicken).